Here is a 326-residue protein sequence, read N- to C-terminus: Biotin synthase (326 aa).

In terms of domain architecture, Radical SAM core spans 42–266 (NEIQLAALLN…LMPKSYVRLA (225 aa)). Residues cysteine 57, cysteine 61, and cysteine 64 each coordinate [4Fe-4S] cluster. Positions 101, 132, 192, and 264 each coordinate [2Fe-2S] cluster.

Belongs to the radical SAM superfamily. Biotin synthase family. As to quaternary structure, homodimer. [4Fe-4S] cluster is required as a cofactor. The cofactor is [2Fe-2S] cluster.

The catalysed reaction is (4R,5S)-dethiobiotin + (sulfur carrier)-SH + 2 reduced [2Fe-2S]-[ferredoxin] + 2 S-adenosyl-L-methionine = (sulfur carrier)-H + biotin + 2 5'-deoxyadenosine + 2 L-methionine + 2 oxidized [2Fe-2S]-[ferredoxin]. Its pathway is cofactor biosynthesis; biotin biosynthesis; biotin from 7,8-diaminononanoate: step 2/2. Catalyzes the conversion of dethiobiotin (DTB) to biotin by the insertion of a sulfur atom into dethiobiotin via a radical-based mechanism. The chain is Biotin synthase from Ehrlichia chaffeensis (strain ATCC CRL-10679 / Arkansas).